Here is a 115-residue protein sequence, read N- to C-terminus: Phosphoribosyl-AMP cyclohydrolase (115 aa).

Asp80 serves as a coordination point for Mg(2+). Cys81 lines the Zn(2+) pocket. Mg(2+) is bound by residues Asp82 and Asp84. Zn(2+) is bound by residues Cys97 and Cys104.

The protein belongs to the PRA-CH family. As to quaternary structure, homodimer. Requires Mg(2+) as cofactor. It depends on Zn(2+) as a cofactor.

The protein localises to the cytoplasm. The enzyme catalyses 1-(5-phospho-beta-D-ribosyl)-5'-AMP + H2O = 1-(5-phospho-beta-D-ribosyl)-5-[(5-phospho-beta-D-ribosylamino)methylideneamino]imidazole-4-carboxamide. It functions in the pathway amino-acid biosynthesis; L-histidine biosynthesis; L-histidine from 5-phospho-alpha-D-ribose 1-diphosphate: step 3/9. Functionally, catalyzes the hydrolysis of the adenine ring of phosphoribosyl-AMP. The protein is Phosphoribosyl-AMP cyclohydrolase of Mycolicibacterium smegmatis (strain ATCC 700084 / mc(2)155) (Mycobacterium smegmatis).